The following is a 246-amino-acid chain: Probable transcriptional regulatory protein HS_0508 (246 aa).

This sequence belongs to the TACO1 family.

Its subcellular location is the cytoplasm. The protein is Probable transcriptional regulatory protein HS_0508 of Histophilus somni (strain 129Pt) (Haemophilus somnus).